The primary structure comprises 185 residues: Peptidyl-tRNA hydrolase (185 aa).

Y14 is a binding site for tRNA. The active-site Proton acceptor is the H19. 3 residues coordinate tRNA: Y64, N66, and N112.

This sequence belongs to the PTH family. Monomer.

It is found in the cytoplasm. It carries out the reaction an N-acyl-L-alpha-aminoacyl-tRNA + H2O = an N-acyl-L-amino acid + a tRNA + H(+). Functionally, hydrolyzes ribosome-free peptidyl-tRNAs (with 1 or more amino acids incorporated), which drop off the ribosome during protein synthesis, or as a result of ribosome stalling. Catalyzes the release of premature peptidyl moieties from peptidyl-tRNA molecules trapped in stalled 50S ribosomal subunits, and thus maintains levels of free tRNAs and 50S ribosomes. The chain is Peptidyl-tRNA hydrolase from Ligilactobacillus salivarius (strain UCC118) (Lactobacillus salivarius).